We begin with the raw amino-acid sequence, 126 residues long: UPF0325 protein VFMJ11_2099 (126 aa).

The protein belongs to the UPF0325 family.

The chain is UPF0325 protein VFMJ11_2099 from Aliivibrio fischeri (strain MJ11) (Vibrio fischeri).